The primary structure comprises 3093 residues: Intermembrane lipid transfer protein VPS13A (3093 aa).

In terms of domain architecture, Chorein N-terminal spans 3-116; the sequence is FESVVVDVLN…LMEAKQQELK (114 aa). The stretch at 373-406 is one TPR 1 repeat; that stretch reads LTSKKPPGELLVSLEELEKTLDVLNITIARQQAE. Serine 839 is modified (phosphoserine). Residues 842 to 848 carry the FFAT motif; it reads EFFDAPC. A Phosphoserine modification is found at serine 1416. Positions 2209-2454 constitute an SHR-BD domain; that stretch reads VAFHSPYWMV…VFYTWADPVG (246 aa). Residues 2860 to 2898 form a TPR 2 repeat; the sequence is ILGLDVLGNPFGLIREFSEGVEAFFYEPYQGAIQGPEEF. A required for lipid droplet localization region spans residues 2953 to 3027; sequence PAGFREGITR…SSTFQGIKRA (75 aa).

This sequence belongs to the VPS13 family. Interacts (via FFAT motif) with VAPA and VAPB. Interacts with RAB7A. Interacts with XK.

It localises to the mitochondrion outer membrane. Its subcellular location is the endoplasmic reticulum membrane. The protein localises to the endosome membrane. It is found in the lysosome membrane. The protein resides in the lipid droplet. It localises to the golgi apparatus. Its subcellular location is the cytoplasmic vesicle. The protein localises to the secretory vesicle. It is found in the neuronal dense core vesicle. Its function is as follows. Mediates the transfer of lipids between membranes at organelle contact sites. Required for the formation or stabilization of ER-mitochondria contact sites which enable transfer of lipids between the ER and mitochondria. Negatively regulates lipid droplet size and motility. Required for efficient lysosomal protein degradation. This is Intermembrane lipid transfer protein VPS13A (VPS13A) from Macaca fascicularis (Crab-eating macaque).